Reading from the N-terminus, the 777-residue chain is B3 domain-containing protein REM-like 1 (777 aa).

Positions 97 to 193 (FVTFTLAPVD…TPVLSLCFEE (97 aa)) form a DNA-binding region, TF-B3 1. Disordered regions lie at residues 200 to 248 (VGEE…TSPS) and 344 to 391 (KSSS…ESSS). A compositionally biased stretch (basic and acidic residues) spans 218–243 (KIVKDDNNKDESSTWKREGNHLRCKD). Positions 252-347 (TLTVTITPDS…TPVLSIKSSS (96 aa)) form a DNA-binding region, TF-B3 2. Over residues 344-368 (KSSSGKGQSEFSKESLSIKPSSGNM) the composition is skewed to polar residues. Residues 370 to 388 (KKVENNREASRKYPPRSRE) show a composition bias toward basic and acidic residues. 2 consecutive DNA-binding regions (TF-B3) follow at residues 582–676 (FLTL…RDSS) and 683–777 (FLTL…FYTK).

The protein resides in the nucleus. The protein is B3 domain-containing protein REM-like 1 of Arabidopsis thaliana (Mouse-ear cress).